We begin with the raw amino-acid sequence, 102 residues long: Amoebiasin-1 (102 aa).

The BC loop motif lies at 27-32; that stretch reads NPTTGY. Residues 51–61 carry the DE loop motif; the sequence is DQHAPGICGCG. Residues 85-93 carry the FG loop motif; the sequence is PWAPNANDR.

It belongs to the protease inhibitor I42 family. Monomer. During oxidative conditions, forms homooligomers; disulfide-linked. Interacts with cysteine protease CP2. Interacts with cysteine protease CP5. Post-translationally, during oxidative conditions, cys-39, cys-58 and cys-60 react to form intra- and inter-molecular disulfide bonds resulting in the loss of the protein inhibitory activity.

The protein localises to the cytoplasm. In terms of biological role, cysteine protease inhibitor. Inhibits cysteine proteases CP1, CP2 and CP5. May protect the cytosol against cysteine proteases released by damaged intracellular vesicles. The chain is Amoebiasin-1 from Entamoeba histolytica (strain ATCC 30459 / HM-1:IMSS / ABRM).